A 149-amino-acid chain; its full sequence is Arginine repressor (149 aa).

It belongs to the ArgR family.

The protein localises to the cytoplasm. It functions in the pathway amino-acid biosynthesis; L-arginine biosynthesis [regulation]. Regulates arginine biosynthesis genes. The sequence is that of Arginine repressor from Exiguobacterium sibiricum (strain DSM 17290 / CCUG 55495 / CIP 109462 / JCM 13490 / 255-15).